The sequence spans 211 residues: Thymidylate kinase (211 aa).

ATP is bound at residue 11-18 (GPDGAGKT).

The protein belongs to the thymidylate kinase family.

The enzyme catalyses dTMP + ATP = dTDP + ADP. Its function is as follows. Phosphorylation of dTMP to form dTDP in both de novo and salvage pathways of dTTP synthesis. The sequence is that of Thymidylate kinase from Streptococcus equi subsp. equi (strain 4047).